Here is a 46-residue protein sequence, read N- to C-terminus: Endochitinase 3 (46 aa).

The segment at 1-21 (MTPQGNKPSSHDVITGRWTPS) is disordered.

It belongs to the glycosyl hydrolase 19 family. Chitinase class I subfamily.

It carries out the reaction Random endo-hydrolysis of N-acetyl-beta-D-glucosaminide (1-&gt;4)-beta-linkages in chitin and chitodextrins.. Its function is as follows. Defense against chitin-containing fungal and bacterial pathogens. This Arachis hypogaea (Peanut) protein is Endochitinase 3.